Consider the following 1052-residue polypeptide: Calmin (1052 aa).

The actin-binding stretch occupies residues 1–288 (MAAQEWDWFQ…IVTYVAQFLE (288 aa)). A Calponin-homology (CH) 1 domain is found at 32–139 (NVQKRTFTRW…LIWNIILFFQ (108 aa)). A compositionally biased stretch (low complexity) spans 148 to 168 (SRSSPSSSLSPGSGGTDSDSS). Residues 148–178 (SRSSPSSSLSPGSGGTDSDSSYPPTPTTERS) form a disordered region. Residues 187 to 291 (RKAIKTLLSW…YVAQFLERFP (105 aa)) enclose the Calponin-homology (CH) 2 domain. Disordered stretches follow at residues 391-420 (STGKTGSIAEPTPESSILSTRKDGRRSNSL), 455-545 (KATK…TLLA), 585-727 (STSQ…SPPL), and 758-929 (GEDL…DSSI). Basic and acidic residues-rich tracts occupy residues 455-465 (KATKELSKQDG) and 472-495 (VSKEKKKSEQEARLVLEAASDKVP). A compositionally biased stretch (polar residues) spans 509–529 (AQPSQDSSFCNGTVESPSSQG). A Phosphoserine modification is found at S537. Composition is skewed to basic and acidic residues over residues 594–614 (PSSHEKTRGEEEGSENHAEKP), 622–651 (PRAETEAAESRLEPKKLEPPPKDPEQEDQG), and 659–669 (PADKKPKVYEK). A Phosphoserine modification is found at S679. A Phosphothreonine modification is found at T710. The segment covering 711–720 (LRSHSEEGLD) has biased composition (basic and acidic residues). Position 724 is a phosphoserine (S724). Residues 759 to 773 (EDLKSEDTDLEHPED) are compositionally biased toward basic and acidic residues. The segment covering 780–791 (REEEADEDEEEA) has biased composition (acidic residues). Low complexity predominate over residues 792-801 (QSSQSSCSFS). Over residues 836-849 (SHEDHQPKETKENG) the composition is skewed to basic and acidic residues. S856 carries the phosphoserine modification. Residues 880-889 (SKKKEKRKHM) are compositionally biased toward basic residues. S925 bears the Phosphoserine mark. Residues 1027–1047 (VIYFILFLWLLVYCLLLFPQL) form a helical; Anchor for type IV membrane protein membrane-spanning segment.

As to expression, expressed in testis. Expressed during testis maturation process and in maturing spermatids. In brain, it is expressed in neurons of the hippocampus, cerebral cortex, and thalamus, Purkinje cells, and also in the choroid plexus and ependymal cells. Expressed predominantly in dendrites and cell bodies of the neurons, but not in axons. The level of expression increases during the period of maturation of the mouse brain after birth.

The protein localises to the membrane. The protein resides in the cytoplasm. The chain is Calmin (Clmn) from Mus musculus (Mouse).